Consider the following 354-residue polypeptide: Caffeic acid 3-O-methyltransferase (354 aa).

121–127 (MNQDKVL) provides a ligand contact to substrate. A substrate binding region spans residues 153–171 (AFEYHGKDQRFNKVFNSGM). S-adenosyl-L-methionine is bound by residues glycine 199, aspartate 222, aspartate 242, methionine 243, and lysine 256. Catalysis depends on histidine 260, which acts as the Proton acceptor.

The protein belongs to the class I-like SAM-binding methyltransferase superfamily. Cation-independent O-methyltransferase family. COMT subfamily. In terms of assembly, homodimer.

It catalyses the reaction (E)-caffeate + S-adenosyl-L-methionine = (E)-ferulate + S-adenosyl-L-homocysteine + H(+). The protein operates within aromatic compound metabolism; phenylpropanoid biosynthesis. In terms of biological role, catalyzes the conversion of caffeic acid to ferulic acid and of 5-hydroxyferulic acid to sinapic acid. The resulting products may subsequently be converted to the corresponding alcohols that are incorporated into lignins. This is Caffeic acid 3-O-methyltransferase from Zinnia elegans (Garden zinnia).